The chain runs to 629 residues: Smc-like protein Sph1 (629 aa).

Coiled coils occupy residues 139–282 (LETE…LLDD) and 318–487 (AETT…NQFD).

This sequence belongs to the Sph1/Sph2 family.

The protein localises to the cytoplasm. Functionally, may play a role in a late step of replication. This is Smc-like protein Sph1 (sph1) from Halobacterium salinarum (strain ATCC 29341 / DSM 671 / R1).